A 256-amino-acid chain; its full sequence is Ubiquinone/menaquinone biosynthesis C-methyltransferase UbiE (256 aa).

2 residues coordinate S-adenosyl-L-methionine: Thr78 and Asp99.

Belongs to the class I-like SAM-binding methyltransferase superfamily. MenG/UbiE family.

The catalysed reaction is a 2-demethylmenaquinol + S-adenosyl-L-methionine = a menaquinol + S-adenosyl-L-homocysteine + H(+). The enzyme catalyses a 2-methoxy-6-(all-trans-polyprenyl)benzene-1,4-diol + S-adenosyl-L-methionine = a 5-methoxy-2-methyl-3-(all-trans-polyprenyl)benzene-1,4-diol + S-adenosyl-L-homocysteine + H(+). Its pathway is quinol/quinone metabolism; menaquinone biosynthesis; menaquinol from 1,4-dihydroxy-2-naphthoate: step 2/2. It functions in the pathway cofactor biosynthesis; ubiquinone biosynthesis. In terms of biological role, methyltransferase required for the conversion of demethylmenaquinol (DMKH2) to menaquinol (MKH2) and the conversion of 2-polyprenyl-6-methoxy-1,4-benzoquinol (DDMQH2) to 2-polyprenyl-3-methyl-6-methoxy-1,4-benzoquinol (DMQH2). The protein is Ubiquinone/menaquinone biosynthesis C-methyltransferase UbiE of Geobacter sulfurreducens (strain ATCC 51573 / DSM 12127 / PCA).